The sequence spans 269 residues: 3-methyl-2-oxobutanoate hydroxymethyltransferase (269 aa).

Residues Asp-50 and Asp-89 each contribute to the Mg(2+) site. 3-methyl-2-oxobutanoate-binding positions include 50–51 (DS), Asp-89, and Lys-118. Mg(2+) is bound at residue Glu-120. Residue Glu-187 is the Proton acceptor of the active site.

The protein belongs to the PanB family. Homodecamer; pentamer of dimers. Mg(2+) is required as a cofactor.

The protein localises to the cytoplasm. It catalyses the reaction 3-methyl-2-oxobutanoate + (6R)-5,10-methylene-5,6,7,8-tetrahydrofolate + H2O = 2-dehydropantoate + (6S)-5,6,7,8-tetrahydrofolate. It functions in the pathway cofactor biosynthesis; (R)-pantothenate biosynthesis; (R)-pantoate from 3-methyl-2-oxobutanoate: step 1/2. Functionally, catalyzes the reversible reaction in which hydroxymethyl group from 5,10-methylenetetrahydrofolate is transferred onto alpha-ketoisovalerate to form ketopantoate. This is 3-methyl-2-oxobutanoate hydroxymethyltransferase from Nitrosomonas eutropha (strain DSM 101675 / C91 / Nm57).